A 207-amino-acid chain; its full sequence is Protein GrpE (207 aa).

Composition is skewed to basic and acidic residues over residues 1 to 11 (MEENRDVKNEE) and 57 to 66 (DLVKNQEEEN). A disordered region spans residues 1–66 (MEENRDVKNE…DLVKNQEEEN (66 aa)).

It belongs to the GrpE family. In terms of assembly, homodimer.

Its subcellular location is the cytoplasm. Its function is as follows. Participates actively in the response to hyperosmotic and heat shock by preventing the aggregation of stress-denatured proteins, in association with DnaK and GrpE. It is the nucleotide exchange factor for DnaK and may function as a thermosensor. Unfolded proteins bind initially to DnaJ; upon interaction with the DnaJ-bound protein, DnaK hydrolyzes its bound ATP, resulting in the formation of a stable complex. GrpE releases ADP from DnaK; ATP binding to DnaK triggers the release of the substrate protein, thus completing the reaction cycle. Several rounds of ATP-dependent interactions between DnaJ, DnaK and GrpE are required for fully efficient folding. The chain is Protein GrpE from Clostridium beijerinckii (strain ATCC 51743 / NCIMB 8052) (Clostridium acetobutylicum).